A 99-amino-acid chain; its full sequence is Late cornified envelope protein 4A (99 aa).

The tract at residues Cys-78–Cys-99 is disordered. Residues Ser-81 to Cys-99 are compositionally biased toward gly residues.

This sequence belongs to the LCE family. Interacts with CYSRT1; the interaction is direct. As to expression, skin-specific. Expression was readily detected in adult trunk skin, adult arm skin, fetal skin, penal skin, vulva, esophagus and tongue. Not expressed in the cervix, rectum, lung, colon, or placenta.

In terms of biological role, precursors of the cornified envelope of the stratum corneum. This chain is Late cornified envelope protein 4A (LCE4A), found in Homo sapiens (Human).